We begin with the raw amino-acid sequence, 424 residues long: Hemagglutinin-esterase (424 aa).

The first 16 residues, 1 to 16 (MFLLPRFVLVSCIIGS), serve as a signal peptide directing secretion. The segment at 7-127 (FVLVSCIIGS…SNDIWMQNKG (121 aa)) is esterase domain 1. At 17 to 392 (LGFDNPPTNV…PICVYDPLPI (376 aa)) the chain is on the virion surface side. Catalysis depends on Ser40, which acts as the Nucleophile. A disulfide bridge connects residues Cys44 and Cys65. Residues Asn54, Asn89, Asn153, Asn236, and Asn301 are each glycosylated (N-linked (GlcNAc...) asparagine; by host). Intrachain disulfides connect Cys113-Cys162, Cys197-Cys276, and Cys205-Cys249. The receptor binding stretch occupies residues 128–266 (LFYTQVYKNM…GNYLAISNEL (139 aa)). The tract at residues 267–379 (LLTVPTKAIC…RCPTAADINT (113 aa)) is esterase domain 2. A disulfide bridge links Cys307 with Cys312. Asn316 carries an N-linked (GlcNAc...) asparagine; by host glycan. Residues Asp326 and His329 each act as charge relay system in the active site. The cysteines at positions 347 and 371 are disulfide-linked. Residue Asn358 is glycosylated (N-linked (GlcNAc...) asparagine; by host). A helical membrane pass occupies residues 393 to 413 (ILLGILLGVAVIIIVVLLLYF). At 414–424 (MVDNGTRLHDA) the chain is on the intravirion side. Asn417 is a glycosylation site (N-linked (GlcNAc...) asparagine; by host).

The protein belongs to the influenza type C/coronaviruses hemagglutinin-esterase family. As to quaternary structure, homodimer; disulfide-linked. Forms a complex with the M protein in the pre-Golgi. Associates then with S-M complex to form a ternary complex S-M-HE. N-glycosylated in the host RER.

Its subcellular location is the virion membrane. It localises to the host cell membrane. It carries out the reaction N-acetyl-9-O-acetylneuraminate + H2O = N-acetylneuraminate + acetate + H(+). The catalysed reaction is N-acetyl-4-O-acetylneuraminate + H2O = N-acetylneuraminate + acetate + H(+). Its function is as follows. Structural protein that makes short spikes at the surface of the virus. Contains receptor binding and receptor-destroying activities. Mediates de-O-acetylation of N-acetyl-4-O-acetylneuraminic acid, which is probably the receptor determinant recognized by the virus on the surface of erythrocytes and susceptible cells. This receptor-destroying activity is important for virus release as it probably helps preventing self-aggregation and ensures the efficient spread of the progeny virus from cell to cell. May serve as a secondary viral attachment protein for initiating infection, the spike protein being the major one. May become a target for both the humoral and the cellular branches of the immune system. In Bovine coronavirus (strain 98TXSF-110-LUN) (BCoV-LUN), this protein is Hemagglutinin-esterase.